A 548-amino-acid polypeptide reads, in one-letter code: Rop guanine nucleotide exchange factor 1 (548 aa).

The span at 1–12 shows a compositional bias: acidic residues; the sequence is MGSLSSEEDDEV. The interval 1-38 is disordered; the sequence is MGSLSSEEDDEVSSERCGSYSPSADISESESSSSFSCH. Residues 19 to 36 show a composition bias toward low complexity; the sequence is SYSPSADISESESSSSFS. Positions 81-462 constitute a PRONE domain; sequence DKQPDNDLSE…DAMRRSISVT (382 aa). Residues 458 to 548 are involved in auto-inhibition; sequence SISVTESLSL…RVTGVTPERD (91 aa). Residues S460 and S480 each carry the phosphoserine modification.

As to quaternary structure, interacts with ARAC10/ROP11 and FER. Forms a complex with ARAC11/ROP1 and PRK2. Interacts in vitro (via PRONE domain) with PRK1, PRK2, PRK3 and PRK4. The C-terminal region is also important for the interaction with PRK2. In terms of processing, phosphorylated at Ser-460 and Ser-480 by PRK2. In terms of tissue distribution, expressed in roots, cotyledons, leaves, stems, sepals, petals, anthers, pollen grains, stigmas and siliques.

It is found in the cytoplasm. The protein localises to the cytosol. It localises to the cell membrane. With respect to regulation, phosphorylation at Ser-460 and Ser-480 by PRK2 releases ROPGEF1 auto-inhibition, thereby activating ROPGEF1, which in turn activates ARAC11/ROP1. Its function is as follows. Guanine-nucleotide exchange factor (GEF) that acts as an activator of Rop (Rho of plants) GTPases by promoting the exchange of GDP for GTP. Acts downstream of PRK2 in the control of polarized pollen tube growth by activating ARAC11/ROP1. In association with ROPGEF4, acts as a specific regulator of ARAC10/ROP11 function in ABA-mediated stomatal closure. May play a role in the Rac/Rop-signaling pathway that controls ROS-mediated root hair development. This Arabidopsis thaliana (Mouse-ear cress) protein is Rop guanine nucleotide exchange factor 1 (ROPGEF1).